The chain runs to 65 residues: Large ribosomal subunit protein bL35 (65 aa).

Belongs to the bacterial ribosomal protein bL35 family.

The sequence is that of Large ribosomal subunit protein bL35 from Nostoc sp. (strain PCC 7120 / SAG 25.82 / UTEX 2576).